The chain runs to 279 residues: Shikimate dehydrogenase (NADP(+)) (279 aa).

Shikimate-binding positions include 14–16 (SLS) and threonine 62. Residue lysine 66 is the Proton acceptor of the active site. Positions 87 and 103 each coordinate shikimate. NADP(+)-binding positions include 127-131 (GAGGA), 151-156 (NRTKAK), and methionine 215. Residue tyrosine 217 coordinates shikimate. Residue glycine 239 participates in NADP(+) binding.

Belongs to the shikimate dehydrogenase family. Homodimer.

It carries out the reaction shikimate + NADP(+) = 3-dehydroshikimate + NADPH + H(+). The protein operates within metabolic intermediate biosynthesis; chorismate biosynthesis; chorismate from D-erythrose 4-phosphate and phosphoenolpyruvate: step 4/7. Involved in the biosynthesis of the chorismate, which leads to the biosynthesis of aromatic amino acids. Catalyzes the reversible NADPH linked reduction of 3-dehydroshikimate (DHSA) to yield shikimate (SA). The chain is Shikimate dehydrogenase (NADP(+)) from Alteromonas mediterranea (strain DSM 17117 / CIP 110805 / LMG 28347 / Deep ecotype).